Reading from the N-terminus, the 411-residue chain is [Pyruvate dehydrogenase (acetyl-transferring)] kinase isozyme 4, mitochondrial (411 aa).

The 231-residue stretch at 138 to 368 (IIEYKDACTV…DAIIYLKALS (231 aa)) folds into the Histidine kinase domain. Residues 254-261 (ELFKNAMR), D293, 312-313 (ST), and 329-334 (GFGYGL) contribute to the ATP site.

This sequence belongs to the PDK/BCKDK protein kinase family. As to quaternary structure, homodimer. Interacts with the pyruvate dehydrogenase complex subunit DLAT, and is part of the multimeric pyruvate dehydrogenase complex that contains multiple copies of pyruvate dehydrogenase (E1), dihydrolipoamide acetyltransferase (DLAT, E2) and lipoamide dehydrogenase (DLD, E3). Ubiquitous; highest levels of expression in heart and skeletal muscle.

It localises to the mitochondrion matrix. The catalysed reaction is L-seryl-[pyruvate dehydrogenase E1 alpha subunit] + ATP = O-phospho-L-seryl-[pyruvate dehydrogenase E1 alpha subunit] + ADP + H(+). In terms of biological role, kinase that plays a key role in regulation of glucose and fatty acid metabolism and homeostasis via phosphorylation of the pyruvate dehydrogenase subunits PDHA1 and PDHA2. This inhibits pyruvate dehydrogenase activity, and thereby regulates metabolite flux through the tricarboxylic acid cycle, down-regulates aerobic respiration and inhibits the formation of acetyl-coenzyme A from pyruvate. Inhibition of pyruvate dehydrogenase decreases glucose utilization and increases fat metabolism in response to prolonged fasting and starvation. Plays an important role in maintaining normal blood glucose levels under starvation, and is involved in the insulin signaling cascade. Via its regulation of pyruvate dehydrogenase activity, plays an important role in maintaining normal blood pH and in preventing the accumulation of ketone bodies under starvation. In the fed state, mediates cellular responses to glucose levels and to a high-fat diet. Regulates both fatty acid oxidation and de novo fatty acid biosynthesis. Plays a role in the generation of reactive oxygen species. Protects detached epithelial cells against anoikis. Plays a role in cell proliferation via its role in regulating carbohydrate and fatty acid metabolism. The polypeptide is [Pyruvate dehydrogenase (acetyl-transferring)] kinase isozyme 4, mitochondrial (PDK4) (Homo sapiens (Human)).